A 435-amino-acid chain; its full sequence is Chaperone SurA (435 aa).

Residues 1-29 form the signal peptide; that stretch reads MINKTLHTKHTLLGLLAMAVLMIPVWSQA. PpiC domains lie at 180 to 281 and 290 to 390; these read QEDF…KMID and VTQY…RVDD.

The protein resides in the periplasm. It carries out the reaction [protein]-peptidylproline (omega=180) = [protein]-peptidylproline (omega=0). Chaperone involved in the correct folding and assembly of outer membrane proteins. Recognizes specific patterns of aromatic residues and the orientation of their side chains, which are found more frequently in integral outer membrane proteins. May act in both early periplasmic and late outer membrane-associated steps of protein maturation. The sequence is that of Chaperone SurA from Alcanivorax borkumensis (strain ATCC 700651 / DSM 11573 / NCIMB 13689 / SK2).